Consider the following 223-residue polypeptide: Octanoyltransferase (223 aa).

The 186-residue stretch at 31–216 (GQIGDTLLLL…QIGEVFALEP (186 aa)) folds into the BPL/LPL catalytic domain. Substrate is bound by residues 76–83 (RGGEVTYH), 145–147 (AIG), and 159–161 (GLA). C177 (acyl-thioester intermediate) is an active-site residue.

Belongs to the LipB family.

The protein resides in the cytoplasm. It catalyses the reaction octanoyl-[ACP] + L-lysyl-[protein] = N(6)-octanoyl-L-lysyl-[protein] + holo-[ACP] + H(+). Its pathway is protein modification; protein lipoylation via endogenous pathway; protein N(6)-(lipoyl)lysine from octanoyl-[acyl-carrier-protein]: step 1/2. Catalyzes the transfer of endogenously produced octanoic acid from octanoyl-acyl-carrier-protein onto the lipoyl domains of lipoate-dependent enzymes. Lipoyl-ACP can also act as a substrate although octanoyl-ACP is likely to be the physiological substrate. The chain is Octanoyltransferase from Chloroflexus aurantiacus (strain ATCC 29366 / DSM 635 / J-10-fl).